A 374-amino-acid chain; its full sequence is MKSSKKDIFILHIWLKLMGCYVFMFITSVVLPIAAMFPNLGFPCYYNTLVDYSKLNLREKNQAQHLTPTLFLEAPEMFFYVTYSFIVDCCSLVYYALAAVAVVKAKKHAPGLMALSQWIMAVGSPTLLYMAVLKLWTIQLYIHTLSYKHIYLAAFVYCLHWLLSMVYTECYITNVSSQWTSSELKKTIPENILLYRVVHVLKPIMMNVHLSVVALETLIFCLSFMMAIGNSFYVMVSDIVFGAINLYLILPIIWYFVTEFWLSKYLPRQFGFYFGVLVASIILILPVVRYDKIFVAAQIHRAVSINIAMIPLCALVALLVRACRVYTDRKKIAYTALPSKPQTIKYTKPIEPSTKQAPDSSIFLEEESDTDFEQ.

The Intravirion segment spans residues 1–16; sequence MKSSKKDIFILHIWLK. Residues 17 to 37 traverse the membrane as a helical segment; sequence LMGCYVFMFITSVVLPIAAMF. The Virion surface segment spans residues 38–82; the sequence is PNLGFPCYYNTLVDYSKLNLREKNQAQHLTPTLFLEAPEMFFYVT. A helical membrane pass occupies residues 83-103; the sequence is YSFIVDCCSLVYYALAAVAVV. Over 104-117 the chain is Intravirion; the sequence is KAKKHAPGLMALSQ. Residues 118-138 traverse the membrane as a helical segment; it reads WIMAVGSPTLLYMAVLKLWTI. Over 139–149 the chain is Virion surface; it reads QLYIHTLSYKH. Residues 150–170 traverse the membrane as a helical segment; sequence IYLAAFVYCLHWLLSMVYTEC. Residues 171 to 207 are Intravirion-facing; the sequence is YITNVSSQWTSSELKKTIPENILLYRVVHVLKPIMMN. Residues 208 to 228 traverse the membrane as a helical segment; the sequence is VHLSVVALETLIFCLSFMMAI. The Virion surface portion of the chain corresponds to 229 to 238; sequence GNSFYVMVSD. Residues 239–259 form a helical membrane-spanning segment; sequence IVFGAINLYLILPIIWYFVTE. Topologically, residues 260–269 are intravirion; the sequence is FWLSKYLPRQ. A helical transmembrane segment spans residues 270 to 290; it reads FGFYFGVLVASIILILPVVRY. Topologically, residues 291–301 are virion surface; that stretch reads DKIFVAAQIHR. A helical transmembrane segment spans residues 302-322; it reads AVSINIAMIPLCALVALLVRA. Over 323–374 the chain is Intravirion; that stretch reads CRVYTDRKKIAYTALPSKPQTIKYTKPIEPSTKQAPDSSIFLEEESDTDFEQ. A disordered region spans residues 345–374; it reads KYTKPIEPSTKQAPDSSIFLEEESDTDFEQ. Positions 364-374 are enriched in acidic residues; it reads LEEESDTDFEQ.

The protein belongs to the herpesviridae glycoprotein M family. In terms of assembly, interacts (via N-terminus) with gN (via N-terminus). The gM-gN heterodimer forms the gCII complex.

It is found in the virion membrane. Its subcellular location is the host Golgi apparatus. The protein localises to the host trans-Golgi network. The protein resides in the host endosome membrane. It localises to the host nucleus inner membrane. In terms of biological role, envelope glycoprotein important for virion assembly and egress. Plays a role in the correct incorporation of gH-gL into virion membrane. Directs the glycoprotein N (gN) to the host trans-Golgi network. The sequence is that of Envelope glycoprotein M from Connochaetes taurinus (Blue wildebeest).